Here is a 250-residue protein sequence, read N- to C-terminus: UPF0758 protein RPB_0700 (250 aa).

The disordered stretch occupies residues 1–27 (MVDPISNAAPPMPADSSERLDPPGFAE). Residues 128 to 250 (VLSSWSAVID…HASLKGLKLF (123 aa)) form the MPN domain. Residues H199, H201, and D212 each contribute to the Zn(2+) site. A JAMM motif motif is present at residues 199–212 (HNHPSGDPTPSQAD).

This sequence belongs to the UPF0758 family.

This Rhodopseudomonas palustris (strain HaA2) protein is UPF0758 protein RPB_0700.